The sequence spans 188 residues: dCTP deaminase (188 aa).

Residues 111–116 (KSTYAR), 135–137 (TLE), Gln-156, Tyr-170, and Gln-180 each bind dCTP. Residue Glu-137 is the Proton donor/acceptor of the active site.

This sequence belongs to the dCTP deaminase family. In terms of assembly, homotrimer.

It carries out the reaction dCTP + H2O + H(+) = dUTP + NH4(+). It functions in the pathway pyrimidine metabolism; dUMP biosynthesis; dUMP from dCTP (dUTP route): step 1/2. Functionally, catalyzes the deamination of dCTP to dUTP. This Acidovorax sp. (strain JS42) protein is dCTP deaminase.